A 625-amino-acid chain; its full sequence is MAU2 chromatid cohesion factor homolog (625 aa).

TPR repeat units lie at residues 96–129 (FDTA…SQNN), 451–484 (GGFY…ANAE), and 491–524 (SCSL…ASKI). Over residues 600 to 611 (TVPTTETSTSAL) the composition is skewed to polar residues. Positions 600–625 (TVPTTETSTSALQQPQQPAAQFGQFY) are disordered. Low complexity predominate over residues 612–625 (QQPQQPAAQFGQFY).

It belongs to the SCC4/mau-2 family. In terms of assembly, interacts with Nipped-B to form the cohesin loading complex.

The protein localises to the nucleus. Its subcellular location is the nucleoplasm. In terms of biological role, required for association of the cohesin complex with chromatin during interphase. Plays a role in sister chromatid cohesion and normal progression through prometaphase. The protein is MAU2 chromatid cohesion factor homolog of Drosophila mojavensis (Fruit fly).